A 169-amino-acid polypeptide reads, in one-letter code: PTS system glucose-specific EIIA component (169 aa).

Residues 39–143 form the PTS EIIA type-1 domain; that stretch reads DVVFAEKIVG…STLTPVVISN (105 aa). Histidine 76 and histidine 91 together coordinate Zn(2+). The active-site Tele-phosphohistidine intermediate; for EIIA activity is the histidine 91. Histidine 91 carries the post-translational modification Phosphohistidine; by HPr.

Heterodimer with glycerol kinase (glpk). The cofactor is Zn(2+).

It localises to the cytoplasm. Functionally, the phosphoenolpyruvate-dependent sugar phosphotransferase system (sugar PTS), a major carbohydrate active transport system, catalyzes the phosphorylation of incoming sugar substrates concomitantly with their translocation across the cell membrane. The enzyme II complex composed of PtsG and Crr is involved in glucose transport. This Escherichia coli O6:H1 (strain CFT073 / ATCC 700928 / UPEC) protein is PTS system glucose-specific EIIA component (crr).